A 373-amino-acid chain; its full sequence is Muscleblind-like protein 2 (373 aa).

C3H1-type zinc fingers lie at residues 13-41, 47-73, 176-204, and 212-238; these read WLTL…HPPK, NGRV…HPPT, TDKL…HPAD, and DNTV…HPPA.

This sequence belongs to the muscleblind family. As to quaternary structure, interacts with ITGA3.

The protein localises to the nucleus. It is found in the cytoplasm. Mediates pre-mRNA alternative splicing regulation. Acts either as activator or repressor of splicing on specific pre-mRNA targets. Inhibits cardiac troponin-T (TNNT2) pre-mRNA exon inclusion but induces insulin receptor (IR) pre-mRNA exon inclusion in muscle. Antagonizes the alternative splicing activity pattern of CELF proteins. RNA-binding protein that binds to 5'ACACCC-3' core sequence, termed zipcode, within the 3'UTR of ITGA3. Binds to CUG triplet repeat expansion in myotonic dystrophy muscle cells by sequestering the target RNAs. Together with RNA binding proteins RBPMS and RBFOX2, activates vascular smooth muscle cells alternative splicing events. Regulates NCOR2 alternative splicing. Seems to regulate expression and localization of ITGA3 by transporting it from the nucleus to cytoplasm at adhesion plaques. May play a role in myotonic dystrophy pathophysiology (DM). In Mus musculus (Mouse), this protein is Muscleblind-like protein 2 (Mbnl2).